The sequence spans 945 residues: Splicing factor, suppressor of white-apricot homolog (945 aa).

2 disordered regions span residues 1-28 and 157-190; these read MYGA…GTGT and YYDP…PFIA. 2 stretches are compositionally biased toward basic and acidic residues: residues 9-21 and 169-178; these read AKAE…KEEA and PSKQREKSEA. One copy of the SURP motif 1 repeat lies at 211-253; the sequence is IIERTANFVCKQGAQFEIMLKAKQARNSQFDFLRFDHYLNPYY. A disordered region spans residues 269 to 298; that stretch reads AESKSEEKKKSGPTSDNEEEDDEEDGSYLH. Serine 283 bears the Phosphoserine mark. Acidic residues predominate over residues 284-294; that stretch reads DNEEEDDEEDG. At lysine 315 the chain carries N6-acetyllysine. 2 disordered regions span residues 332 to 355 and 403 to 438; these read KAQA…PSQV and SSSP…STTT. Positions 335–352 are enriched in low complexity; the sequence is ADSSAPAPPTADGTPAQP. A compositionally biased stretch (pro residues) spans 412–425; it reads VPPPPGTTPPPPPT. Residues 426 to 438 show a composition bias toward low complexity; sequence TAESSSGVTSTTT. An SURP motif 2 repeat occupies 458–498; it reads VIDKLAEYVARNGLKFETSVRAKNDQRFEFLQPWHQYNAYY. Disordered regions lie at residues 512–566, 589–680, and 714–921; these read GSTQ…TVDG, PLEK…QAER, and GVMP…VQSK. The span at 514-527 shows a compositional bias: low complexity; it reads TQAASTAEEAPTET. Over residues 528-540 the composition is skewed to acidic residues; sequence AVEESSEAGEDGA. Positions 589–598 are enriched in basic and acidic residues; the sequence is PLEKNRVKLD. Phosphoserine is present on residues serine 601 and serine 621. Positions 615–630 are enriched in low complexity; it reads SSVANPSPAAAPPSAV. Positions 632–686 form a coiled coil; sequence EEKKPQLTQEELEAKQAKQKLEDRLAAAAREKLAQASKESKEKQLQAERKRKAAL. Threonine 639 bears the Phosphothreonine mark. Composition is skewed to basic and acidic residues over residues 643 to 679 and 733 to 752; these read LEAK…LQAE and KPPE…EERE. Basic residues-rich tracts occupy residues 753–787 and 795–810; these read KKKK…KAKH and TVRR…RRRA. The segment covering 811–821 has biased composition (basic and acidic residues); sequence HSPERRREDRS. Residues serine 829 and serine 831 each carry the phosphoserine modification. A compositionally biased stretch (basic residues) spans 835–861; sequence SRKRTRSRSPHEKKKKRRSRSRTKAKA. The segment covering 871 to 894 has biased composition (low complexity); that stretch reads QAAQRPSAHSAHSASISPVESRGS. The span at 895–908 shows a compositional bias: basic and acidic residues; the sequence is SQERSRGVSQEKDG. 2 positions are modified to phosphoserine: serine 899 and serine 903. Residues 909-920 show a composition bias toward low complexity; sequence QISSAIVSSVQS.

The protein resides in the nucleus. Its function is as follows. Plays a role as an alternative splicing regulator. Regulate its own expression at the level of RNA processing. Also regulates the splicing of fibronectin and CD45 genes. May act, at least in part, by interaction with other R/S-containing splicing factors. Represses the splicing of MAPT/Tau exon 10. The sequence is that of Splicing factor, suppressor of white-apricot homolog (Sfswap) from Rattus norvegicus (Rat).